A 519-amino-acid chain; its full sequence is Laccase-2 (519 aa).

An N-terminal signal peptide occupies residues Met-1–Ala-20. 2 Plastocyanin-like domains span residues Ile-22–Tyr-147 and Val-159–Tyr-301. N-linked (GlcNAc...) asparagine glycosylation occurs at Asn-74. 4 residues coordinate Cu cation: His-84, His-86, His-129, and His-131. Cystine bridges form between Cys-105/Cys-508 and Cys-137/Cys-225. 6 N-linked (GlcNAc...) asparagine glycosylation sites follow: Asn-161, Asn-228, Asn-237, Asn-271, Asn-353, and Asn-361. Residues Thr-368 to Asp-490 enclose the Plastocyanin-like 3 domain. Positions 415, 418, and 420 each coordinate Cu cation. Asn-456 is a glycosylation site (N-linked (GlcNAc...) asparagine). 4 residues coordinate Cu cation: His-472, Cys-473, His-474, and His-478.

The protein belongs to the multicopper oxidase family. It depends on Cu cation as a cofactor.

It localises to the secreted. It carries out the reaction 4 hydroquinone + O2 = 4 benzosemiquinone + 2 H2O. Its function is as follows. Lignin degradation and detoxification of lignin-derived products. The protein is Laccase-2 (LCC2) of Trametes versicolor (White-rot fungus).